We begin with the raw amino-acid sequence, 82 residues long: MKTLLLTLVVVTIVCLDLGYTRKCHNSPLSLVYQTCPIGQNICFKINVKEAPSIPVKRACAATCPKSSALVKVVCCKTDKCN.

A signal peptide spans Met-1–Thr-21. Disulfide bonds link Cys-24–Cys-43, Cys-36–Cys-60, Cys-64–Cys-75, and Cys-76–Cys-81.

The protein belongs to the three-finger toxin family. Short-chain subfamily. Orphan group XV sub-subfamily. Expressed by the venom gland.

It localises to the secreted. The protein localises to the target cell membrane. Functionally, has low cytotoxic activity. The polypeptide is Cytotoxin homolog Clbp-3 (Naja atra (Chinese cobra)).